The chain runs to 390 residues: Homoserine O-acetyltransferase (390 aa).

Positions 55-366 constitute an AB hydrolase-1 domain; the sequence is NAILINHAFS…ESDCGHDAFL (312 aa). The Nucleophile role is filled by serine 163. Arginine 232 contacts substrate. Active-site residues include aspartate 329 and histidine 362. Aspartate 363 contributes to the substrate binding site.

This sequence belongs to the AB hydrolase superfamily. MetX family. As to quaternary structure, homodimer.

It localises to the cytoplasm. It catalyses the reaction L-homoserine + acetyl-CoA = O-acetyl-L-homoserine + CoA. The protein operates within amino-acid biosynthesis; L-methionine biosynthesis via de novo pathway; O-acetyl-L-homoserine from L-homoserine: step 1/1. In terms of biological role, transfers an acetyl group from acetyl-CoA to L-homoserine, forming acetyl-L-homoserine. This is Homoserine O-acetyltransferase from Desulfotalea psychrophila (strain LSv54 / DSM 12343).